A 297-amino-acid polypeptide reads, in one-letter code: tRNA uridine(34) hydroxylase (297 aa).

The Rhodanese domain occupies 137 to 232 (RGDDVVFFDG…YGEKYGDKGL (96 aa)). The Cysteine persulfide intermediate role is filled by C192.

It belongs to the TrhO family.

It catalyses the reaction uridine(34) in tRNA + AH2 + O2 = 5-hydroxyuridine(34) in tRNA + A + H2O. Catalyzes oxygen-dependent 5-hydroxyuridine (ho5U) modification at position 34 in tRNAs. The sequence is that of tRNA uridine(34) hydroxylase from Corynebacterium urealyticum (strain ATCC 43042 / DSM 7109).